The following is a 102-amino-acid chain: N(4)-acetylcytidine amidohydrolase (102 aa).

Residues threonine 6–glutamate 93 form the ASCH domain. Residue lysine 20 is the Proton acceptor of the active site. Catalysis depends on threonine 23, which acts as the Nucleophile. Glutamate 73 serves as the catalytic Proton donor.

It belongs to the N(4)-acetylcytidine amidohydrolase family.

The enzyme catalyses N(4)-acetylcytidine + H2O = cytidine + acetate + H(+). It catalyses the reaction N(4)-acetyl-2'-deoxycytidine + H2O = 2'-deoxycytidine + acetate + H(+). The catalysed reaction is N(4)-acetylcytosine + H2O = cytosine + acetate + H(+). Its function is as follows. Catalyzes the hydrolysis of N(4)-acetylcytidine (ac4C). The sequence is that of N(4)-acetylcytidine amidohydrolase from Serratia proteamaculans (strain 568).